Here is a 65-residue protein sequence, read N- to C-terminus: Large ribosomal subunit protein uL29 (65 aa).

It belongs to the universal ribosomal protein uL29 family.

The protein is Large ribosomal subunit protein uL29 of Buchnera aphidicola subsp. Cinara cedri (strain Cc).